A 197-amino-acid chain; its full sequence is Fucoxanthin-chlorophyll a-c binding protein D, chloroplastic (197 aa).

The N-terminal 31 residues, Met-1–Met-31, are a transit peptide targeting the chloroplast. The next 3 helical transmembrane spans lie at Ile-73–Ile-94, Pro-114–Met-133, and Gly-174–Pro-196.

This sequence belongs to the fucoxanthin chlorophyll protein family. In terms of assembly, the LHC complex of chromophytic algae is composed of fucoxanthin, chlorophyll A and C bound non-covalently by fucoxanthin chlorophyll proteins (FCPs). The ratio of the pigments in LHC; fucoxanthin: chlorophyll C: chlorophyll A; (0.6-1): (0.1-0.3): (1).

The protein resides in the plastid. It localises to the chloroplast thylakoid membrane. The light-harvesting complex (LHC) functions as a light receptor, it captures and delivers excitation energy to photosystems with which it is closely associated. Energy is transferred from the carotenoid and chlorophyll C (or B) to chlorophyll A and the photosynthetic reaction centers where it is used to synthesize ATP and reducing power. The chain is Fucoxanthin-chlorophyll a-c binding protein D, chloroplastic (FCPD) from Phaeodactylum tricornutum (Diatom).